A 422-amino-acid chain; its full sequence is G-protein coupled receptor 151 protein (422 aa).

Residues 1 to 45 (MGKAMLRAGFADTNSSNMNESFARLHFAGGYLPSDSKDWRTIIPS) are Extracellular-facing. N-linked (GlcNAc...) asparagine glycosylation is found at Asn-14 and Asn-19. A helical membrane pass occupies residues 46–66 (LLMAVCLVGLVGNLCVIGILL). At 67-76 (HGVWKRKPST) the chain is on the cytoplasmic side. Residues 77–97 (IHSLILNLSLADFSLLLFSAP) form a helical membrane-spanning segment. The Extracellular segment spans residues 98 to 123 (VRAAAYSKGVWDLGWFICKSSDWFTH). Cys-115 and Cys-191 are oxidised to a cystine. A helical transmembrane segment spans residues 124–144 (VCMAAKSLTFVVVAKACFAYA). The Cytoplasmic portion of the chain corresponds to 145–157 (SDPAKQESIHSRT). Residues 158 to 178 (IWSVLAGIWVVASLLPLPEWL) form a helical membrane-spanning segment. The Extracellular segment spans residues 179 to 205 (FSTTRRHAGVEMCLVDVPAVAEEFMSM). A helical membrane pass occupies residues 206 to 226 (FGKLYPLLVFCLPLLLAGVYF). The Cytoplasmic portion of the chain corresponds to 227-259 (WRAYDQCKTRCTKTRNLRDQMRSKQLTVMLLST). Residues 260-280 (AIISALLWLPEWIAWLWVWHV) traverse the membrane as a helical segment. Residues 281–290 (KAGGPMPPQG) lie on the Extracellular side of the membrane. Residues 291–311 (FIALSQVLMFFTSTANPLIFL) form a helical membrane-spanning segment. The Cytoplasmic segment spans residues 312–422 (VMSEEFKAGL…HEGQETEGCN (111 aa)). A disordered region spans residues 339–422 (VQEAPAGNTE…HEGQETEGCN (84 aa)). The segment covering 366–380 (TDGRGSPDDSKEKSG) has biased composition (basic and acidic residues).

High expression in the brain and lower levels in kidney and liver. In the nervous system expressed specifically in the habenular area (at protein level).

The protein resides in the cell membrane. Functionally, proton-sensing G-protein coupled receptor. The chain is G-protein coupled receptor 151 protein (Gpr151) from Mus musculus (Mouse).